Consider the following 369-residue polypeptide: Biglycan (369 aa).

The first 16 residues, 1–16 (MWPLWLVASLLALSQA), serve as a signal peptide directing secretion. Positions 17-37 (LPFEQKGFWDFTLDDGLPMLN) are excised as a propeptide. Residues S42 and S48 are each glycosylated (O-linked (Xyl...) (glycosaminoglycan) serine). 2 disulfide bridges follow: C64-C70 and C68-C77. LRR repeat units follow at residues 83-103 (KAVP…NNDI), 104-127 (SELR…NNKI), 128-151 (SKIH…KNHL), 152-172 (VEIP…DNRI), 173-196 (RKVP…GNPL), 197-221 (ENSG…EAKL), 222-242 (TGIP…HNKI), 243-266 (QAIE…HNQI), 267-290 (RMIE…NNKL), 291-313 (SRVP…TNNI), 314-343 (TKVG…NNPV), and 344-369 (PYWE…NYKK). N-linked (GlcNAc...) asparagine glycans are attached at residues N271 and N312. An intrachain disulfide couples C322 to C355.

The protein belongs to the small leucine-rich proteoglycan (SLRP) family. SLRP class I subfamily. As to quaternary structure, homodimer. Forms a ternary complex with MFAP2 and ELN. Post-translationally, the two attached glycosaminoglycan chains can be either chondroitin sulfate or dermatan sulfate.

The protein resides in the secreted. Its subcellular location is the extracellular space. It is found in the extracellular matrix. In terms of biological role, may be involved in collagen fiber assembly. This chain is Biglycan (BGN), found in Canis lupus familiaris (Dog).